The sequence spans 253 residues: 5'-nucleotidase SurE (253 aa).

A divalent metal cation contacts are provided by aspartate 8, aspartate 9, serine 39, and asparagine 97.

Belongs to the SurE nucleotidase family. Requires a divalent metal cation as cofactor.

Its subcellular location is the cytoplasm. It carries out the reaction a ribonucleoside 5'-phosphate + H2O = a ribonucleoside + phosphate. In terms of biological role, nucleotidase that shows phosphatase activity on nucleoside 5'-monophosphates. The protein is 5'-nucleotidase SurE of Aeromonas hydrophila subsp. hydrophila (strain ATCC 7966 / DSM 30187 / BCRC 13018 / CCUG 14551 / JCM 1027 / KCTC 2358 / NCIMB 9240 / NCTC 8049).